The following is a 492-amino-acid chain: Cobyric acid synthase (492 aa).

Positions 252–440 (QLNVVVPVLT…LHGIFEQTEA (189 aa)) constitute a GATase cobBQ-type domain. C333 (nucleophile) is an active-site residue. The active site involves H432.

This sequence belongs to the CobB/CobQ family. CobQ subfamily.

Its pathway is cofactor biosynthesis; adenosylcobalamin biosynthesis. In terms of biological role, catalyzes amidations at positions B, D, E, and G on adenosylcobyrinic A,C-diamide. NH(2) groups are provided by glutamine, and one molecule of ATP is hydrogenolyzed for each amidation. The chain is Cobyric acid synthase from Photobacterium profundum (strain SS9).